Here is a 902-residue protein sequence, read N- to C-terminus: AAA+ ATPase ClpV1 (902 aa).

The Clp R domain maps to Phe-10–Asp-151. Repeat stretches follow at residues Leu-13–Leu-78 and Leu-88–Asp-151. Gly-237–Thr-244 is an ATP binding site. Residues Ala-441–Glu-559 adopt a coiled-coil conformation. Gly-640–Thr-647 provides a ligand contact to ATP.

Belongs to the ClpA/ClpB family. As to quaternary structure, interacts with TagJ.

It is found in the cytoplasm. Its function is as follows. Component of the H1 type VI (H1-T6SS) secretion system that plays a role in the release of toxins targeting both eukaryotic and prokaryotic species. Acts as an AAA(+) ATPase that disassembles the contracted sheath, which resets the systems for reassembly of an extended sheath that is ready to fire again. This chain is AAA+ ATPase ClpV1 (clpV1), found in Pseudomonas aeruginosa (strain ATCC 15692 / DSM 22644 / CIP 104116 / JCM 14847 / LMG 12228 / 1C / PRS 101 / PAO1).